The following is a 226-amino-acid chain: ATP synthase F(0) complex subunit a (226 aa).

The next 7 helical transmembrane spans lie at 11–31 (SPELLMIPTALLSMLVPVLLI), 37–54 (LLGNRMTTAIAWLLMTIM), 72–92 (LTSLLLMILLSNLLGLLPYTF), 98–118 (LSMNMAMAIPLWMATIITGMT), 138–158 (IPFMIIIETISLLMRPLALGV), 178–198 (TLNFITSHITLSIMTYLLLFL), and 199–219 (LCILELAVACIQAYVFVLLII).

It belongs to the ATPase A chain family. Component of the ATP synthase complex composed at least of ATP5F1A/subunit alpha, ATP5F1B/subunit beta, ATP5MC1/subunit c (homooctomer), MT-ATP6/subunit a, MT-ATP8/subunit 8, ATP5ME/subunit e, ATP5MF/subunit f, ATP5MG/subunit g, ATP5MK/subunit k, ATP5MJ/subunit j, ATP5F1C/subunit gamma, ATP5F1D/subunit delta, ATP5F1E/subunit epsilon, ATP5PF/subunit F6, ATP5PB/subunit b, ATP5PD/subunit d, ATP5PO/subunit OSCP. ATP synthase complex consists of a soluble F(1) head domain (subunits alpha(3) and beta(3)) - the catalytic core - and a membrane F(0) domain - the membrane proton channel (subunits c, a, 8, e, f, g, k and j). These two domains are linked by a central stalk (subunits gamma, delta, and epsilon) rotating inside the F1 region and a stationary peripheral stalk (subunits F6, b, d, and OSCP). Interacts with DNAJC30; interaction is direct.

It is found in the mitochondrion inner membrane. The catalysed reaction is H(+)(in) = H(+)(out). Subunit a, of the mitochondrial membrane ATP synthase complex (F(1)F(0) ATP synthase or Complex V) that produces ATP from ADP in the presence of a proton gradient across the membrane which is generated by electron transport complexes of the respiratory chain. ATP synthase complex consist of a soluble F(1) head domain - the catalytic core - and a membrane F(1) domain - the membrane proton channel. These two domains are linked by a central stalk rotating inside the F(1) region and a stationary peripheral stalk. During catalysis, ATP synthesis in the catalytic domain of F(1) is coupled via a rotary mechanism of the central stalk subunits to proton translocation. With the subunit c (ATP5MC1), forms the proton-conducting channel in the F(0) domain, that contains two crucial half-channels (inlet and outlet) that facilitate proton movement from the mitochondrial intermembrane space (IMS) into the matrix. Protons are taken up via the inlet half-channel and released through the outlet half-channel, following a Grotthuss mechanism. The protein is ATP synthase F(0) complex subunit a of Lycodon semicarinatus (Ryukyu odd-tooth snake).